Reading from the N-terminus, the 333-residue chain is Anthranilate phosphoribosyltransferase (333 aa).

5-phospho-alpha-D-ribose 1-diphosphate contacts are provided by residues Gly-81, 84–85 (GD), Thr-89, 91–94 (NIST), 109–117 (KHGNRSVSS), and Ala-121. Position 81 (Gly-81) interacts with anthranilate. Ser-93 lines the Mg(2+) pocket. Asn-112 provides a ligand contact to anthranilate. Anthranilate is bound at residue Arg-167. 2 residues coordinate Mg(2+): Asp-225 and Glu-226.

The protein belongs to the anthranilate phosphoribosyltransferase family. In terms of assembly, homodimer. Mg(2+) serves as cofactor.

The enzyme catalyses N-(5-phospho-beta-D-ribosyl)anthranilate + diphosphate = 5-phospho-alpha-D-ribose 1-diphosphate + anthranilate. The protein operates within amino-acid biosynthesis; L-tryptophan biosynthesis; L-tryptophan from chorismate: step 2/5. Catalyzes the transfer of the phosphoribosyl group of 5-phosphorylribose-1-pyrophosphate (PRPP) to anthranilate to yield N-(5'-phosphoribosyl)-anthranilate (PRA). This is Anthranilate phosphoribosyltransferase from Pasteurella multocida (strain Pm70).